Reading from the N-terminus, the 635-residue chain is Threonine--tRNA ligase (635 aa).

The TGS domain occupies 1 to 61 (MIQITLPDSS…SQDSALSIVT (61 aa)). The segment at 242 to 533 (DHRKLGKELD…LIEEHAGALP (292 aa)) is catalytic. Residues cysteine 333, histidine 384, and histidine 510 each coordinate Zn(2+).

This sequence belongs to the class-II aminoacyl-tRNA synthetase family. Homodimer. It depends on Zn(2+) as a cofactor.

The protein resides in the cytoplasm. The catalysed reaction is tRNA(Thr) + L-threonine + ATP = L-threonyl-tRNA(Thr) + AMP + diphosphate + H(+). Its function is as follows. Catalyzes the attachment of threonine to tRNA(Thr) in a two-step reaction: L-threonine is first activated by ATP to form Thr-AMP and then transferred to the acceptor end of tRNA(Thr). Also edits incorrectly charged L-seryl-tRNA(Thr). The polypeptide is Threonine--tRNA ligase (Polaromonas naphthalenivorans (strain CJ2)).